Reading from the N-terminus, the 520-residue chain is GMP synthase [glutamine-hydrolyzing] (520 aa).

In terms of domain architecture, Glutamine amidotransferase type-1 spans 12–205 (KIIVLDYGSQ…AISICGARGD (194 aa)). Cys-89 (nucleophile) is an active-site residue. Catalysis depends on residues His-179 and Glu-181. The region spanning 206–395 (WSMDNFIDME…LGMPEEIVWR (190 aa)) is the GMPS ATP-PPase domain. 233 to 239 (SGGVDSS) lines the ATP pocket.

In terms of assembly, homodimer.

The enzyme catalyses XMP + L-glutamine + ATP + H2O = GMP + L-glutamate + AMP + diphosphate + 2 H(+). Its pathway is purine metabolism; GMP biosynthesis; GMP from XMP (L-Gln route): step 1/1. Catalyzes the synthesis of GMP from XMP. This is GMP synthase [glutamine-hydrolyzing] from Streptococcus pyogenes serotype M3 (strain SSI-1).